The following is a 140-amino-acid chain: Putative transcription elongation factor S-II-like protein 349L (140 aa).

The segment at Gly-100–Val-139 adopts a TFIIS-type zinc-finger fold. Residues Cys-104, Cys-106, Cys-131, and Cys-134 each coordinate Zn(2+).

The protein belongs to the IIV-6 349L family.

The chain is Putative transcription elongation factor S-II-like protein 349L from Acheta domesticus (House cricket).